The primary structure comprises 266 residues: Putative carbamate hydrolase RutD (266 aa).

The region spanning 14 to 115 is the AB hydrolase-1 domain; it reads PVVVLISGLG…TVLVSVNGWL (102 aa).

Belongs to the AB hydrolase superfamily. Hydrolase RutD family.

It catalyses the reaction carbamate + 2 H(+) = NH4(+) + CO2. In terms of biological role, involved in pyrimidine catabolism. May facilitate the hydrolysis of carbamate, a reaction that can also occur spontaneously. This chain is Putative carbamate hydrolase RutD, found in Escherichia coli O9:H4 (strain HS).